We begin with the raw amino-acid sequence, 200 residues long: Large ribosomal subunit protein bL25 (200 aa).

The protein belongs to the bacterial ribosomal protein bL25 family. CTC subfamily. As to quaternary structure, part of the 50S ribosomal subunit; part of the 5S rRNA/L5/L18/L25 subcomplex. Contacts the 5S rRNA. Binds to the 5S rRNA independently of L5 and L18.

Its function is as follows. This is one of the proteins that binds to the 5S RNA in the ribosome where it forms part of the central protuberance. The polypeptide is Large ribosomal subunit protein bL25 (Leifsonia xyli subsp. xyli (strain CTCB07)).